The chain runs to 120 residues: NAD(P)H-quinone oxidoreductase subunit 3, chloroplastic (120 aa).

3 consecutive transmembrane segments (helical) span residues 9–29 (IFWAFLIISSLIPILAFFVSG), 64–84 (MFALVFVVFDVETVFLYPWAM), and 88–108 (VLGISVFVEALIFVLILIVGL).

It belongs to the complex I subunit 3 family. In terms of assembly, NDH is composed of at least 16 different subunits, 5 of which are encoded in the nucleus.

It is found in the plastid. It localises to the chloroplast thylakoid membrane. It catalyses the reaction a plastoquinone + NADH + (n+1) H(+)(in) = a plastoquinol + NAD(+) + n H(+)(out). The enzyme catalyses a plastoquinone + NADPH + (n+1) H(+)(in) = a plastoquinol + NADP(+) + n H(+)(out). In terms of biological role, NDH shuttles electrons from NAD(P)H:plastoquinone, via FMN and iron-sulfur (Fe-S) centers, to quinones in the photosynthetic chain and possibly in a chloroplast respiratory chain. The immediate electron acceptor for the enzyme in this species is believed to be plastoquinone. Couples the redox reaction to proton translocation, and thus conserves the redox energy in a proton gradient. The chain is NAD(P)H-quinone oxidoreductase subunit 3, chloroplastic from Daucus carota (Wild carrot).